The sequence spans 204 residues: Glycerol-3-phosphate acyltransferase (204 aa).

Helical transmembrane passes span 8–28 (ILIFAYLLGSINSAIIVCYIF), 53–73 (VLAAITLIFDILKGLVPVVIA), 81–101 (FITACTALYAILGHIFPIFFG), 116–136 (FGFSWILGLIFVITWLCVAII), and 155–175 (VIFTSDLQVAAPFLIIAIIIL).

The protein belongs to the PlsY family. Probably interacts with PlsX.

It localises to the cell inner membrane. It carries out the reaction an acyl phosphate + sn-glycerol 3-phosphate = a 1-acyl-sn-glycero-3-phosphate + phosphate. It functions in the pathway lipid metabolism; phospholipid metabolism. Its function is as follows. Catalyzes the transfer of an acyl group from acyl-phosphate (acyl-PO(4)) to glycerol-3-phosphate (G3P) to form lysophosphatidic acid (LPA). This enzyme utilizes acyl-phosphate as fatty acyl donor, but not acyl-CoA or acyl-ACP. In Francisella tularensis subsp. holarctica (strain OSU18), this protein is Glycerol-3-phosphate acyltransferase.